The chain runs to 278 residues: Acyl-[acyl-carrier-protein]--UDP-N-acetylglucosamine O-acyltransferase (278 aa).

The protein belongs to the transferase hexapeptide repeat family. LpxA subfamily. Homotrimer.

The protein localises to the cytoplasm. The enzyme catalyses a (3R)-hydroxyacyl-[ACP] + UDP-N-acetyl-alpha-D-glucosamine = a UDP-3-O-[(3R)-3-hydroxyacyl]-N-acetyl-alpha-D-glucosamine + holo-[ACP]. The protein operates within glycolipid biosynthesis; lipid IV(A) biosynthesis; lipid IV(A) from (3R)-3-hydroxytetradecanoyl-[acyl-carrier-protein] and UDP-N-acetyl-alpha-D-glucosamine: step 1/6. In terms of biological role, involved in the biosynthesis of lipid A, a phosphorylated glycolipid that anchors the lipopolysaccharide to the outer membrane of the cell. This is Acyl-[acyl-carrier-protein]--UDP-N-acetylglucosamine O-acyltransferase from Brucella anthropi (strain ATCC 49188 / DSM 6882 / CCUG 24695 / JCM 21032 / LMG 3331 / NBRC 15819 / NCTC 12168 / Alc 37) (Ochrobactrum anthropi).